A 224-amino-acid polypeptide reads, in one-letter code: Prolactin-3D1 (224 aa).

The first 29 residues, 1–29, serve as a signal peptide directing secretion; it reads MQLTLNLSGSAGMQLLLLVSSLLLWENVS. 2 cysteine pairs are disulfide-bonded: Cys81-Cys199 and Cys216-Cys224. Residues Asn109 and Asn158 are each glycosylated (N-linked (GlcNAc...) asparagine).

This sequence belongs to the somatotropin/prolactin family.

It localises to the secreted. The protein is Prolactin-3D1 (Prl3d1) of Mus musculus (Mouse).